A 315-amino-acid chain; its full sequence is Cytoplasmic dynein intermediate light chain DYN3 (315 aa).

This sequence belongs to the dynein light intermediate chain DYN3 family. The cytoplasmic dynein is composed of at least two heavy chains and a number of intermediate and light chains.

The protein localises to the cytoplasm. The protein resides in the cytoskeleton. Functionally, component of the cytoplasmic dynein which acts as a motor for the intracellular retrograde motility of vesicles and organelles along microtubules. May play an important role in the proper orientation of the mitotic spindle into the budding daughter cell yeast. Probably required for normal progression of the cell cycle. This Candida glabrata (strain ATCC 2001 / BCRC 20586 / JCM 3761 / NBRC 0622 / NRRL Y-65 / CBS 138) (Yeast) protein is Cytoplasmic dynein intermediate light chain DYN3 (DYN3).